The chain runs to 987 residues: UPF0182 protein DIP0733 (987 aa).

The next 7 membrane-spanning stretches (helical) occupy residues 19 to 39 (LTWL…VVDL), 63 to 83 (IGLF…AGWF), 115 to 135 (FLVV…QQAW), 176 to 196 (SVLL…LGGI), 212 to 234 (YAKV…SYWL), 261 to 281 (AKIV…SVIV), and 290 to 310 (ISTV…PIMM). The span at 904–927 (DLGEAKGLKPESQNRDKPEDKEGK) shows a compositional bias: basic and acidic residues. The disordered stretch occupies residues 904–950 (DLGEAKGLKPESQNRDKPEDKEGKAPSTPSAPASGSGTTGEAIGKIN). The span at 928–943 (APSTPSAPASGSGTTG) shows a compositional bias: low complexity.

It belongs to the UPF0182 family.

The protein localises to the cell membrane. The protein is UPF0182 protein DIP0733 of Corynebacterium diphtheriae (strain ATCC 700971 / NCTC 13129 / Biotype gravis).